The primary structure comprises 324 residues: Phospho-N-acetylmuramoyl-pentapeptide-transferase (324 aa).

10 helical membrane passes run 9–29 (TFAV…PFLV), 53–73 (TMGA…FSFI), 77–97 (VSAA…LGFL), 117–137 (FLGQ…SDFA), 149–169 (IDLG…FSNA), 176–196 (LDGL…VIAF), 201–221 (MDVA…LLFN), 227–247 (IFMG…VSIL), 253–273 (LLLL…LQVF), and 304–324 (VLTF…VVIF).

It belongs to the glycosyltransferase 4 family. MraY subfamily. Mg(2+) is required as a cofactor.

It localises to the cell membrane. The catalysed reaction is UDP-N-acetyl-alpha-D-muramoyl-L-alanyl-gamma-D-glutamyl-meso-2,6-diaminopimeloyl-D-alanyl-D-alanine + di-trans,octa-cis-undecaprenyl phosphate = di-trans,octa-cis-undecaprenyl diphospho-N-acetyl-alpha-D-muramoyl-L-alanyl-D-glutamyl-meso-2,6-diaminopimeloyl-D-alanyl-D-alanine + UMP. It participates in cell wall biogenesis; peptidoglycan biosynthesis. In terms of biological role, catalyzes the initial step of the lipid cycle reactions in the biosynthesis of the cell wall peptidoglycan: transfers peptidoglycan precursor phospho-MurNAc-pentapeptide from UDP-MurNAc-pentapeptide onto the lipid carrier undecaprenyl phosphate, yielding undecaprenyl-pyrophosphoryl-MurNAc-pentapeptide, known as lipid I. This Listeria innocua serovar 6a (strain ATCC BAA-680 / CLIP 11262) protein is Phospho-N-acetylmuramoyl-pentapeptide-transferase.